A 227-amino-acid chain; its full sequence is Esterase Rv3036c (227 aa).

Residues 3–23 form a helical membrane-spanning segment; sequence YLIATAVLVAVVLVGWPAAGA.

It belongs to the RsiV family.

It is found in the cell membrane. It localises to the secreted. Its subcellular location is the cell wall. It catalyses the reaction a fatty acid ester + H2O = an aliphatic alcohol + a fatty acid + H(+). The catalysed reaction is an acetyl ester + H2O = an aliphatic alcohol + acetate + H(+). The enzyme catalyses a butanoate ester + H2O = an aliphatic alcohol + butanoate + H(+). It carries out the reaction a hexanoate ester + H2O = an aliphatic alcohol + hexanoate + H(+). It catalyses the reaction a dodecanoate ester + H2O = an aliphatic alcohol + dodecanoate + H(+). The catalysed reaction is a tetradecanoate ester + H2O = an aliphatic alcohol + tetradecanoate + H(+). The enzyme catalyses an octanoate ester + H2O = an aliphatic alcohol + octanoate + H(+). Its function is as follows. Hydrolyzes ester substrates carbon chain lengths ranging from C2 to C14. In vitro, acetate (C2), butyrate (C4) and caprylate (C6) are hydrolyzed with high efficiency. Has lower activity against laurate (C12), myristate (C14) and caproate (C8), and weak activity against palmitate (C16). The polypeptide is Esterase Rv3036c (Mycobacterium tuberculosis (strain ATCC 25618 / H37Rv)).